The primary structure comprises 424 residues: Glutamate-1-semialdehyde 2,1-aminomutase (424 aa).

Position 263 is an N6-(pyridoxal phosphate)lysine (Lys-263).

This sequence belongs to the class-III pyridoxal-phosphate-dependent aminotransferase family. HemL subfamily. As to quaternary structure, homodimer. Requires pyridoxal 5'-phosphate as cofactor.

Its subcellular location is the cytoplasm. The enzyme catalyses (S)-4-amino-5-oxopentanoate = 5-aminolevulinate. The protein operates within porphyrin-containing compound metabolism; protoporphyrin-IX biosynthesis; 5-aminolevulinate from L-glutamyl-tRNA(Glu): step 2/2. This chain is Glutamate-1-semialdehyde 2,1-aminomutase, found in Campylobacter jejuni subsp. doylei (strain ATCC BAA-1458 / RM4099 / 269.97).